A 122-amino-acid polypeptide reads, in one-letter code: MIQQESRLRVADNSGAREILTIKVLGGSGRKTANIGDVIVATVKQATPGGVVKKGEVVKAVIVRTKSGARRADGSYIKFDENAAVIIRDDKSPRGTRIFGPVARELRENNFMKIVSLAPEVL.

This sequence belongs to the universal ribosomal protein uL14 family. In terms of assembly, part of the 50S ribosomal subunit. Forms a cluster with proteins L3 and L19. In the 70S ribosome, L14 and L19 interact and together make contacts with the 16S rRNA in bridges B5 and B8.

Functionally, binds to 23S rRNA. Forms part of two intersubunit bridges in the 70S ribosome. This chain is Large ribosomal subunit protein uL14, found in Enterococcus faecalis (strain ATCC 700802 / V583).